The sequence spans 319 residues: Phosphoribosylformylglycinamidine cyclo-ligase (319 aa).

It belongs to the AIR synthase family.

It localises to the cytoplasm. The enzyme catalyses 2-formamido-N(1)-(5-O-phospho-beta-D-ribosyl)acetamidine + ATP = 5-amino-1-(5-phospho-beta-D-ribosyl)imidazole + ADP + phosphate + H(+). It functions in the pathway purine metabolism; IMP biosynthesis via de novo pathway; 5-amino-1-(5-phospho-D-ribosyl)imidazole from N(2)-formyl-N(1)-(5-phospho-D-ribosyl)glycinamide: step 2/2. The polypeptide is Phosphoribosylformylglycinamidine cyclo-ligase (Sulfurisphaera tokodaii (strain DSM 16993 / JCM 10545 / NBRC 100140 / 7) (Sulfolobus tokodaii)).